Reading from the N-terminus, the 375-residue chain is Dual-specificity RNA methyltransferase RlmN (375 aa).

Glutamate 94 serves as the catalytic Proton acceptor. The 240-residue stretch at 100-339 (EDDRATLCVS…VTVRKTRGDD (240 aa)) folds into the Radical SAM core domain. Cysteine 107 and cysteine 344 are disulfide-bonded. Positions 114, 118, and 121 each coordinate [4Fe-4S] cluster. Residues 168 to 169 (GE), serine 200, 222 to 224 (SLH), and asparagine 301 each bind S-adenosyl-L-methionine. Cysteine 344 functions as the S-methylcysteine intermediate in the catalytic mechanism.

Belongs to the radical SAM superfamily. RlmN family. [4Fe-4S] cluster is required as a cofactor.

Its subcellular location is the cytoplasm. It carries out the reaction adenosine(2503) in 23S rRNA + 2 reduced [2Fe-2S]-[ferredoxin] + 2 S-adenosyl-L-methionine = 2-methyladenosine(2503) in 23S rRNA + 5'-deoxyadenosine + L-methionine + 2 oxidized [2Fe-2S]-[ferredoxin] + S-adenosyl-L-homocysteine. The catalysed reaction is adenosine(37) in tRNA + 2 reduced [2Fe-2S]-[ferredoxin] + 2 S-adenosyl-L-methionine = 2-methyladenosine(37) in tRNA + 5'-deoxyadenosine + L-methionine + 2 oxidized [2Fe-2S]-[ferredoxin] + S-adenosyl-L-homocysteine. Its function is as follows. Specifically methylates position 2 of adenine 2503 in 23S rRNA and position 2 of adenine 37 in tRNAs. m2A2503 modification seems to play a crucial role in the proofreading step occurring at the peptidyl transferase center and thus would serve to optimize ribosomal fidelity. This Vibrio campbellii (strain ATCC BAA-1116) protein is Dual-specificity RNA methyltransferase RlmN.